We begin with the raw amino-acid sequence, 466 residues long: ATP synthase subunit beta (466 aa).

An ATP-binding site is contributed by 148-155 (GGAGVGKT).

The protein belongs to the ATPase alpha/beta chains family. As to quaternary structure, F-type ATPases have 2 components, CF(1) - the catalytic core - and CF(0) - the membrane proton channel. CF(1) has five subunits: alpha(3), beta(3), gamma(1), delta(1), epsilon(1). CF(0) has three main subunits: a(1), b(2) and c(9-12). The alpha and beta chains form an alternating ring which encloses part of the gamma chain. CF(1) is attached to CF(0) by a central stalk formed by the gamma and epsilon chains, while a peripheral stalk is formed by the delta and b chains.

The protein resides in the cell inner membrane. The catalysed reaction is ATP + H2O + 4 H(+)(in) = ADP + phosphate + 5 H(+)(out). In terms of biological role, produces ATP from ADP in the presence of a proton gradient across the membrane. The catalytic sites are hosted primarily by the beta subunits. The polypeptide is ATP synthase subunit beta (Xylella fastidiosa (strain M23)).